We begin with the raw amino-acid sequence, 225 residues long: LysM and putative peptidoglycan-binding domain-containing protein 1 (225 aa).

Phosphoserine is present on residues Ser-23 and Ser-33. In terms of domain architecture, LysM spans 40–84; that stretch reads LEHQLAPGDTLAGLALKYGVTMEQIKRANRLYTNDSIFLKKTLHI. The interval 97 to 153 is disordered; it reads LDSEEEKDGEEAVQPSKDEVRPHSAERKKRERGLGHANGEPLPTAGQEPARHDLSAS. The segment covering 98–107 has biased composition (acidic residues); the sequence is DSEEEKDGEE. Ser-99 bears the Phosphoserine mark. Over residues 112–121 the composition is skewed to basic and acidic residues; the sequence is SKDEVRPHSA. Phosphoserine is present on residues Ser-164, Ser-179, Ser-192, and Ser-210. Residues 170-225 are disordered; that stretch reads AAQKLKKGESGIPGEDSSLHLSSPRMQQRAVLGPVPLTQTSRTRTLRDQEDEIFKL. The segment covering 214–225 has biased composition (basic and acidic residues); sequence TLRDQEDEIFKL.

The chain is LysM and putative peptidoglycan-binding domain-containing protein 1 (LYSMD1) from Bos taurus (Bovine).